Reading from the N-terminus, the 246-residue chain is UDP-2,3-diacylglucosamine hydrolase (246 aa).

Mn(2+)-binding residues include D8, H10, D41, N79, and H114. 79-80 (NR) contributes to the substrate binding site. The substrate site is built by D122, K164, K167, and H195. Mn(2+)-binding residues include H195 and H197.

It belongs to the LpxH family. Requires Mn(2+) as cofactor.

The protein resides in the cell inner membrane. The enzyme catalyses UDP-2-N,3-O-bis[(3R)-3-hydroxytetradecanoyl]-alpha-D-glucosamine + H2O = 2-N,3-O-bis[(3R)-3-hydroxytetradecanoyl]-alpha-D-glucosaminyl 1-phosphate + UMP + 2 H(+). Its pathway is glycolipid biosynthesis; lipid IV(A) biosynthesis; lipid IV(A) from (3R)-3-hydroxytetradecanoyl-[acyl-carrier-protein] and UDP-N-acetyl-alpha-D-glucosamine: step 4/6. In terms of biological role, hydrolyzes the pyrophosphate bond of UDP-2,3-diacylglucosamine to yield 2,3-diacylglucosamine 1-phosphate (lipid X) and UMP by catalyzing the attack of water at the alpha-P atom. Involved in the biosynthesis of lipid A, a phosphorylated glycolipid that anchors the lipopolysaccharide to the outer membrane of the cell. This Vibrio cholerae serotype O1 (strain ATCC 39541 / Classical Ogawa 395 / O395) protein is UDP-2,3-diacylglucosamine hydrolase.